The primary structure comprises 335 residues: MKLSDFDYYLPEELIAQTPAEPRDSSRLMVLNRKEKTIEHRIFRDIVEYLKPGDLLVRNITKVIPARLYGVKETGARVEILLLEKISEGVWEALVKPGSKVKKGTKIILSEGVEVICKDYSQQGARILEFNCSDDKLFELGNAPLPPYIKNQKVPFERYQTVYSKETGSVAAPTAGLHFTEELLERLRNKGLEFADLILHVGLGTFRPVKVEDIREHKMHSERYYVPAETVKKIRETRKNKGRIIAVGTTSVRTLETIARLPNQESYHGKTDIFIYPPFEFKLTDAIITNFHLPKSTLLMLVAAFAGKDFILEAYNTAVKMKYRFFSLGDACFIY.

The protein belongs to the QueA family. In terms of assembly, monomer.

The protein localises to the cytoplasm. The catalysed reaction is 7-aminomethyl-7-carbaguanosine(34) in tRNA + S-adenosyl-L-methionine = epoxyqueuosine(34) in tRNA + adenine + L-methionine + 2 H(+). It functions in the pathway tRNA modification; tRNA-queuosine biosynthesis. In terms of biological role, transfers and isomerizes the ribose moiety from AdoMet to the 7-aminomethyl group of 7-deazaguanine (preQ1-tRNA) to give epoxyqueuosine (oQ-tRNA). The sequence is that of S-adenosylmethionine:tRNA ribosyltransferase-isomerase from Thermosipho africanus (strain TCF52B).